We begin with the raw amino-acid sequence, 1088 residues long: Exportin-T (1088 aa).

Over residues 435 to 503 (KNNNNKNKNT…VKNANNIKNN (69 aa)) the composition is skewed to low complexity. Disordered stretches follow at residues 435–513 (KNNN…DDDD) and 1059–1088 (LNNN…KNGH).

This sequence belongs to the exportin family.

It is found in the nucleus. Its subcellular location is the cytoplasm. Mediates the nuclear export of aminoacylated tRNAs. In Dictyostelium discoideum (Social amoeba), this protein is Exportin-T (xpot).